A 128-amino-acid chain; its full sequence is DELTA-urthionin-Uf1a (128 aa).

An N-terminal signal peptide occupies residues 1–24 (MEGKTVIVSLLLLSIVVGQIQVEA). Intrachain disulfides connect Cys-27–Cys-64, Cys-28–Cys-56, and Cys-40–Cys-50. A propeptide spans 67 to 128 (LSIPEVTGEA…LCTKNSIETA (62 aa)) (acidic domain).

It belongs to the plant thionin (TC 1.C.44) family. Expressed in trichomes, that are stiff epidermal hairs located on the surface of petioles and leaves.

The protein resides in the secreted. Its function is as follows. Plant defense protein that causes pain by probable disruption of cell membranes. Shows cytotoxic activity against the neuroblastoma cell line SH-SY5Y and slightly weaker activity against several non-neuronal cell lines. In vivo, intraplantar injection into mice causes several nocifensive responses, along with swelling and redness. In Urtica ferox (Tree nettle), this protein is DELTA-urthionin-Uf1a.